Reading from the N-terminus, the 570-residue chain is Periplasmic trehalase (570 aa).

A signal peptide spans 1–34; that stretch reads MIPPEIRRSVLLQKAIKLALAGTLLTFASFSATA. Residues R159, 166–167, N203, 212–214, 284–286, and G317 contribute to the substrate site; these read WD, RSQ, and RPE. Catalysis depends on proton donor/acceptor residues D319 and E503. E518 provides a ligand contact to substrate. Residues 544–570 form a disordered region; sequence KPCDSVPSTRPASLSATPTKTPSAATQ. A compositionally biased stretch (low complexity) spans 554 to 570; the sequence is PASLSATPTKTPSAATQ.

This sequence belongs to the glycosyl hydrolase 37 family. Monomer.

It localises to the periplasm. It catalyses the reaction alpha,alpha-trehalose + H2O = alpha-D-glucose + beta-D-glucose. Its function is as follows. Provides the cells with the ability to utilize trehalose at high osmolarity by splitting it into glucose molecules that can subsequently be taken up by the phosphotransferase-mediated uptake system. The protein is Periplasmic trehalase of Salmonella schwarzengrund (strain CVM19633).